The sequence spans 232 residues: Orotidine 5'-phosphate decarboxylase (232 aa).

Substrate contacts are provided by residues aspartate 13, lysine 35, 62 to 71 (DLKFHDIPNT), threonine 122, arginine 182, glutamine 191, glycine 211, and arginine 212. The Proton donor role is filled by lysine 64.

It belongs to the OMP decarboxylase family. Type 1 subfamily. As to quaternary structure, homodimer.

It catalyses the reaction orotidine 5'-phosphate + H(+) = UMP + CO2. It participates in pyrimidine metabolism; UMP biosynthesis via de novo pathway; UMP from orotate: step 2/2. Its function is as follows. Catalyzes the decarboxylation of orotidine 5'-monophosphate (OMP) to uridine 5'-monophosphate (UMP). This chain is Orotidine 5'-phosphate decarboxylase, found in Pseudomonas syringae pv. tomato (strain ATCC BAA-871 / DC3000).